Consider the following 330-residue polypeptide: MTNKQPVRVAVTGAAGQIGYSLLFRIAAGDMLGKDQPVILQLLEITPALKALQGVVMELRDGAYPLLADVVTSDDPLVAFKDADYALLVGAMPRKAGMERGDLLGANGGIFKPQGQALNQVASRDVKVLVVGNPANTNALIAQQNAPDLDPRQFTAMVRLDHNRAISQLAEKTGQPVSAIKNITIWGNHSSTQYPDLSQATVGGRPALDLVDRTWYEQEYIPTVAKRGAAIIEARGASSAASAASAAIDHMRDWALGTSEGEWVSMGIPSDGSYGVPEGLIYGFPVTVKDGKYQIVQGLEISEFSRGKMDATARELEEERDEIRKLGLIS.

Glycine 13–glycine 19 provides a ligand contact to NAD(+). Positions 94 and 100 each coordinate substrate. NAD(+)-binding positions include asparagine 107, glutamine 114, and valine 131–asparagine 133. Asparagine 133 and arginine 164 together coordinate substrate. Histidine 189 serves as the catalytic Proton acceptor.

The protein belongs to the LDH/MDH superfamily. MDH type 2 family.

The catalysed reaction is (S)-malate + NAD(+) = oxaloacetate + NADH + H(+). In terms of biological role, catalyzes the reversible oxidation of malate to oxaloacetate. In Deinococcus deserti (strain DSM 17065 / CIP 109153 / LMG 22923 / VCD115), this protein is Malate dehydrogenase.